Here is a 265-residue protein sequence, read N- to C-terminus: Mlc titration factor A (265 aa).

The Zn(2+) site is built by His111, His148, His152, and Glu211.

The protein belongs to the MtfA family. Interacts with Mlc. Zn(2+) is required as a cofactor.

It is found in the cytoplasm. In terms of biological role, involved in the modulation of the activity of the glucose-phosphotransferase system (glucose-PTS). Interacts with the transcriptional repressor Mlc, preventing its interaction with DNA and leading to the modulation of expression of genes regulated by Mlc, including ptsG, which encodes the PTS system glucose-specific EIICB component. Its function is as follows. Shows zinc-dependent metallopeptidase activity. The polypeptide is Mlc titration factor A (Klebsiella pneumoniae (strain 342)).